The sequence spans 177 residues: ATP synthase subunit delta (177 aa).

The protein belongs to the ATPase delta chain family. In terms of assembly, F-type ATPases have 2 components, F(1) - the catalytic core - and F(0) - the membrane proton channel. F(1) has five subunits: alpha(3), beta(3), gamma(1), delta(1), epsilon(1). F(0) has three main subunits: a(1), b(2) and c(10-14). The alpha and beta chains form an alternating ring which encloses part of the gamma chain. F(1) is attached to F(0) by a central stalk formed by the gamma and epsilon chains, while a peripheral stalk is formed by the delta and b chains.

Its subcellular location is the cell membrane. F(1)F(0) ATP synthase produces ATP from ADP in the presence of a proton or sodium gradient. F-type ATPases consist of two structural domains, F(1) containing the extramembraneous catalytic core and F(0) containing the membrane proton channel, linked together by a central stalk and a peripheral stalk. During catalysis, ATP synthesis in the catalytic domain of F(1) is coupled via a rotary mechanism of the central stalk subunits to proton translocation. Functionally, this protein is part of the stalk that links CF(0) to CF(1). It either transmits conformational changes from CF(0) to CF(1) or is implicated in proton conduction. The protein is ATP synthase subunit delta of Buchnera aphidicola subsp. Schizaphis graminum (strain Sg).